Here is a 243-residue protein sequence, read N- to C-terminus: 1-(5-phosphoribosyl)-5-[(5-phosphoribosylamino)methylideneamino] imidazole-4-carboxamide isomerase (243 aa).

Asp-8 functions as the Proton acceptor in the catalytic mechanism. The active-site Proton donor is Asp-129.

Belongs to the HisA/HisF family.

The protein localises to the cytoplasm. It catalyses the reaction 1-(5-phospho-beta-D-ribosyl)-5-[(5-phospho-beta-D-ribosylamino)methylideneamino]imidazole-4-carboxamide = 5-[(5-phospho-1-deoxy-D-ribulos-1-ylimino)methylamino]-1-(5-phospho-beta-D-ribosyl)imidazole-4-carboxamide. It functions in the pathway amino-acid biosynthesis; L-histidine biosynthesis; L-histidine from 5-phospho-alpha-D-ribose 1-diphosphate: step 4/9. This chain is 1-(5-phosphoribosyl)-5-[(5-phosphoribosylamino)methylideneamino] imidazole-4-carboxamide isomerase, found in Brucella anthropi (strain ATCC 49188 / DSM 6882 / CCUG 24695 / JCM 21032 / LMG 3331 / NBRC 15819 / NCTC 12168 / Alc 37) (Ochrobactrum anthropi).